Reading from the N-terminus, the 2363-residue chain is Highly reducing polyketide synthase cnsI (2363 aa).

The region spanning 14-440 (PEPIAIIGMS…GSNAHAIVES (427 aa)) is the Ketosynthase family 3 (KS3) domain. Residues cysteine 187, histidine 322, and histidine 363 each act as for beta-ketoacyl synthase activity in the active site. Residues 546-854 (LAFVFTGQGA…FLQVLKSINA (309 aa)) are malonyl-CoA:ACP transacylase (MAT) domain. Serine 638 serves as the catalytic For malonyltransferase activity. The N-terminal hotdog fold stretch occupies residues 938-1068 (HDLLGSPMDF…GTFTLHYDAR (131 aa)). The tract at residues 938–1224 (HDLLGSPMDF…RLDSIASDVS (287 aa)) is dehydratase (DH) domain. Positions 938–1246 (HDLLGSPMDF…LGPVPMSKVP (309 aa)) constitute a PKS/mFAS DH domain. Histidine 970 (proton acceptor; for dehydratase activity) is an active-site residue. Positions 1089 to 1246 (TAECETNRDA…LGPVPMSKVP (158 aa)) are C-terminal hotdog fold. Aspartate 1159 functions as the Proton donor; for dehydratase activity in the catalytic mechanism. The segment at 1669–1976 (GGQWVEDRQL…ARQTGISVAI (308 aa)) is enoylreductase (ER) domain. Residues 2001–2177 (TYLLAGGLGM…PGHSIDIGLV (177 aa)) are catalytic ketoreductase (KRc) domain. One can recognise a Carrier domain in the interval 2279–2357 (EDASYVVNQA…VLSEKIAAQS (79 aa)). Serine 2317 carries the post-translational modification O-(pantetheine 4'-phosphoryl)serine.

The protein operates within alkaloid biosynthesis. Highly reducing polyketide synthase; part of the gene cluster that mediates the biosynthesis of communesins, a prominent class of indole alkaloids with great potential as pharmaceuticals. Communesins are biosynthesized by the coupling of tryptamine and aurantioclavine, two building blocks derived from L-tryptophan. The L-tryptophan decarboxylase cnsB converts L-tryptophan to tryptamine, whereas the tryptophan dimethylallyltransferase cnsF converts L-tryptophan to 4-dimethylallyl tryptophan which is further transformed to aurantioclavine by the aurantioclavine synthase cnsA, probably aided by the catalase cnsD. The cytochrome P450 monooxygenase cnsC catalyzes the heterodimeric coupling between the two different indole moieties, tryptamine and aurantioclavine, to construct vicinal quaternary stereocenters and yield the heptacyclic communesin scaffold. The O-methyltransferase cnsE then methylates the communesin scaffold to produce communesin K, the simplest characterized communesin that contains the heptacyclic core. The dioxygenase cnsJ converts communesin K into communesin I. Acylation to introduce the hexadienyl group at position N16 of communesin I by the acyltransferase cnsK leads to the production of communesin B. The hexadienyl group is produced by the highly reducing polyketide synthase cnsI, before being hydrolytically removed from cnsI by the serine hydrolase cnsH, converted into hexadienyl-CoA by the CoA ligase cnsG, and then transferred to communesin I by cnsK. Surprisingly, cnsK may also be a promiscuous acyltransferase that can tolerate a range of acyl groups, including acetyl-, propionyl-, and butyryl-CoA, which lead to communesins A, G and H respectively. The roles of the alpha-ketoglutarate-dependent dioxygenases cnsM and cnsP have still to be determined. The chain is Highly reducing polyketide synthase cnsI from Penicillium expansum (Blue mold rot fungus).